The sequence spans 285 residues: Pantothenate synthetase (285 aa).

30–37 is an ATP binding site; the sequence is MGFLHEGH. Catalysis depends on H37, which acts as the Proton donor. Q61 lines the (R)-pantoate pocket. Q61 contacts beta-alanine. ATP is bound at residue 147-150; sequence GQKD. Q153 provides a ligand contact to (R)-pantoate. Residues V176 and 184–187 contribute to the ATP site; that span reads KSSR.

The protein belongs to the pantothenate synthetase family. Homodimer.

The protein localises to the cytoplasm. The enzyme catalyses (R)-pantoate + beta-alanine + ATP = (R)-pantothenate + AMP + diphosphate + H(+). The protein operates within cofactor biosynthesis; (R)-pantothenate biosynthesis; (R)-pantothenate from (R)-pantoate and beta-alanine: step 1/1. Functionally, catalyzes the condensation of pantoate with beta-alanine in an ATP-dependent reaction via a pantoyl-adenylate intermediate. The chain is Pantothenate synthetase from Listeria monocytogenes serotype 4b (strain F2365).